Reading from the N-terminus, the 340-residue chain is Cell invasion protein SipD (340 aa).

Disordered regions lie at residues 1-26 and 57-76; these read MLNI…PSAS and QAQQ…NDER. Residues 291-319 adopt a coiled-coil conformation; the sequence is FKAQEENLKTTLQTLTQKYSNANSLYDNL.

The protein belongs to the invasin protein D family.

The protein resides in the secreted. In terms of biological role, required for translocation of effector proteins via the type III secretion system SPI-1, which is essential for an efficient bacterial internalization. Probably acts by modulating the secretion of SipA, SipB, and SipC. The sequence is that of Cell invasion protein SipD (sipD) from Salmonella typhi.